Here is a 1176-residue protein sequence, read N- to C-terminus: 3-hydroxy-3-methylglutaryl-coenzyme A reductase (1176 aa).

Residues 1–34 (MSLPNHSGSSAFKSFSYIVGTGIKRAAKLSTRNP) are Cytoplasmic-facing. Residues 35 to 55 (IEMIVVVLILSSFSYFYLFNL) traverse the membrane as a helical segment. Over 56-299 (ARTSDIFSGT…VKELIDLADN (244 aa)) the chain is Lumenal. 2 N-linked (GlcNAc...) asparagine glycosylation sites follow: asparagine 224 and asparagine 238. Residues 300 to 320 (IDIIVILVGYIMMIATFISLY) form a helical membrane-spanning segment. The region spanning 301 to 465 (DIIVILVGYI…FTWYTAVLAL (165 aa)) is the SSD domain. Residues 321 to 330 (VNMRAMGSRY) are Cytoplasmic-facing. Residues 331–351 (TLATAVVFNGFFSFMLALLTV) traverse the membrane as a helical segment. The Lumenal segment spans residues 352–355 (RALG). A helical transmembrane segment spans residues 356 to 376 (VDVYPVVLAEAIPFLAVTIGF). Topologically, residues 377–422 (ERPFKLTKRVFQFSKETPLTKQEIRTTIMRAVDTVALPIARDCFME) are cytoplasmic. Residues 423–443 (IIVLVLGAKSGISGLEEFCLL) traverse the membrane as a helical segment. Serine 444 is a topological domain (lumenal). Residues 445–465 (AILLAYDFIIMFTWYTAVLAL) form a helical membrane-spanning segment. Residues 466–524 (KLELLRIREINGISADDIKKGTKKSTGYIRRTVIKAFSDDHAAGANTANQKADGPIIGR) lie on the Cytoplasmic side of the membrane. A helical membrane pass occupies residues 525–545 (VKLLMIVGFVVMHIFKFCSAF). Residues 546-622 (QSVGPQVNIT…DTYAVYIQHP (77 aa)) lie on the Lumenal side of the membrane. N-linked (GlcNAc...) asparagine glycosylation is found at asparagine 553 and asparagine 596. Residues 623 to 643 (VISKWLTIALFVSLFLNTYLF) form a helical membrane-spanning segment. Residues 644–1176 (NVAKQPKQIV…GTEPGTCIKS (533 aa)) lie on the Cytoplasmic side of the membrane. Residues 699 to 724 (PNHKRSHNHHHSHSHSHNHHSNHHQS) are disordered. The segment covering 700 to 721 (NHKRSHNHHHSHSHSHNHHSNH) has biased composition (basic residues). Catalysis depends on glutamate 841, which acts as the Charge relay system. 847 to 853 (STARGCK) contacts CoA. NADP(+)-binding positions include 907-909 (SRF) and 934-942 (DAMGMNMIS). Lysine 972 serves as the catalytic Charge relay system. Residue 1001 to 1003 (VLK) coordinates CoA. Aspartate 1048 acts as the Charge relay system in catalysis. 1145–1146 (AH) lines the CoA pocket. The active-site Proton donor is histidine 1146. 1150–1151 (NR) is an NADP(+) binding site. The disordered stretch occupies residues 1153-1176 (TQAPTITSGPAPSTGTEPGTCIKS).

This sequence belongs to the HMG-CoA reductase family.

The protein resides in the endoplasmic reticulum membrane. It carries out the reaction (R)-mevalonate + 2 NADP(+) + CoA = (3S)-3-hydroxy-3-methylglutaryl-CoA + 2 NADPH + 2 H(+). It functions in the pathway metabolic intermediate biosynthesis; (R)-mevalonate biosynthesis; (R)-mevalonate from acetyl-CoA: step 3/3. Its function is as follows. HMG-CoA reductase; part of the first module of ergosterol biosynthesis pathway that includes the early steps of the pathway, conserved across all eukaryotes, and which results in the formation of mevalonate from acetyl-coenzyme A (acetyl-CoA). In this module, the cytosolic acetyl-CoA acetyltransferase catalyzes the formation of acetoacetyl-CoA. The hydroxymethylglutaryl-CoA synthase then condenses acetyl-CoA with acetoacetyl-CoA to form HMG-CoA. The rate-limiting step of the early module is the reduction to mevalonate by the 3-hydroxy-3-methylglutaryl-coenzyme A (HMG-CoA) reductase hmgA. This is 3-hydroxy-3-methylglutaryl-coenzyme A reductase from Phycomyces blakesleeanus (strain ATCC 8743b / DSM 1359 / FGSC 10004 / NBRC 33097 / NRRL 1555).